Here is a 449-residue protein sequence, read N- to C-terminus: Nucleoporin NUP42 (449 aa).

Residues 1–25 (MAICSFFLQGRCRYGEKCWNEHPRG) form a C3H1-type zinc finger. Disordered stretches follow at residues 22–84 (HPRG…GFDN) and 218–237 (DMTS…SSFP). 2 stretches are compositionally biased toward polar residues: residues 47 to 83 (WGSS…SGFD) and 218 to 227 (DMTSGYNGQQ). FG repeat units follow at residues 231–232 (FG), 274–275 (FG), 284–285 (FG), 305–306 (FG), 314–315 (FG), 335–336 (FG), and 347–348 (FG).

As to quaternary structure, probable component of the nuclear pore complex (NPC).

It localises to the nucleus. Its subcellular location is the nuclear pore complex. The protein resides in the nucleus membrane. Its function is as follows. Required for the export of mRNAs containing poly(A) tails from the nucleus into the cytoplasm. The polypeptide is Nucleoporin NUP42 (nup42) (Xenopus tropicalis (Western clawed frog)).